Here is a 662-residue protein sequence, read N- to C-terminus: U6 snRNA-specific terminal uridylyltransferase (662 aa).

Residues aspartate 183 and aspartate 185 each coordinate Mg(2+). Positions cysteine 384–histidine 437 constitute a PAP-associated domain.

It belongs to the DNA polymerase type-B-like family. As to quaternary structure, forms a complex composed of sart-3, terminal uridylyltransferase usip-1 and U6 snRNA; complex formation is mediated by usip-1 and sart-3 binding to U6 snRNA. Mg(2+) is required as a cofactor. Requires Mn(2+) as cofactor. Ubiquitously expressed.

Its subcellular location is the nucleus. It localises to the nucleoplasm. The catalysed reaction is RNA(n) + UTP = RNA(n)-3'-uridine ribonucleotide + diphosphate. Acts as a specific terminal uridylyltransferase for U6 snRNA. Responsible for the addition of UTP at the 3' end of U6 snRNA which stabilizes U6 snRNA. Does not have activity towards modified uridine containing 3'-monophosphorylation or 2'-O-methylation. The sequence is that of U6 snRNA-specific terminal uridylyltransferase from Caenorhabditis elegans.